Here is a 258-residue protein sequence, read N- to C-terminus: MATRIDVSGLTAYYGKFKAVADVNLTIEPKNVTAFIGPSGCGKSTVLRTLNRMHEVLPGARVEGQVLLDGEDLYGPGMDPVAVRRTVGMVFQRPNPFPTMSIYENVIAGLKLNGVRKKALLDERVEESLRGANLWEEVKDRLGRPGAGLSGGQQQRLCIARAIAVEPQVLLMDEPCSALDPISTLAIEDLIAKLKSSFTIVIVTHNMQQASRVSDSTAFFSLEKTGDPGRLVEYDKTSQIFSNPKEKRTEDYISGRFG.

Residues 5-247 (IDVSGLTAYY…SQIFSNPKEK (243 aa)) form the ABC transporter domain. ATP is bound at residue 37 to 44 (GPSGCGKS).

This sequence belongs to the ABC transporter superfamily. Phosphate importer (TC 3.A.1.7) family. The complex is composed of two ATP-binding proteins (PstB), two transmembrane proteins (PstC and PstA) and a solute-binding protein (PstS).

Its subcellular location is the cell membrane. The catalysed reaction is phosphate(out) + ATP + H2O = ADP + 2 phosphate(in) + H(+). In terms of biological role, part of the ABC transporter complex PstSACB involved in phosphate import. Responsible for energy coupling to the transport system. This chain is Phosphate import ATP-binding protein PstB, found in Frankia casuarinae (strain DSM 45818 / CECT 9043 / HFP020203 / CcI3).